Here is a 388-residue protein sequence, read N- to C-terminus: Succinyl-diaminopimelate desuccinylase (388 aa).

His-72 provides a ligand contact to Zn(2+). Asp-74 is a catalytic residue. Asp-105 lines the Zn(2+) pocket. Glu-139 serves as the catalytic Proton acceptor. Glu-140, Glu-168, and His-353 together coordinate Zn(2+).

The protein belongs to the peptidase M20A family. DapE subfamily. As to quaternary structure, homodimer. Requires Zn(2+) as cofactor. Co(2+) is required as a cofactor.

It catalyses the reaction N-succinyl-(2S,6S)-2,6-diaminopimelate + H2O = (2S,6S)-2,6-diaminopimelate + succinate. Its pathway is amino-acid biosynthesis; L-lysine biosynthesis via DAP pathway; LL-2,6-diaminopimelate from (S)-tetrahydrodipicolinate (succinylase route): step 3/3. In terms of biological role, catalyzes the hydrolysis of N-succinyl-L,L-diaminopimelic acid (SDAP), forming succinate and LL-2,6-diaminopimelate (DAP), an intermediate involved in the bacterial biosynthesis of lysine and meso-diaminopimelic acid, an essential component of bacterial cell walls. This Orientia tsutsugamushi (strain Ikeda) (Rickettsia tsutsugamushi) protein is Succinyl-diaminopimelate desuccinylase.